The sequence spans 365 residues: Anhydro-N-acetylmuramic acid kinase (365 aa).

9–16 (GTSLDGVD) contacts ATP.

It belongs to the anhydro-N-acetylmuramic acid kinase family.

It catalyses the reaction 1,6-anhydro-N-acetyl-beta-muramate + ATP + H2O = N-acetyl-D-muramate 6-phosphate + ADP + H(+). The protein operates within amino-sugar metabolism; 1,6-anhydro-N-acetylmuramate degradation. It participates in cell wall biogenesis; peptidoglycan recycling. In terms of biological role, catalyzes the specific phosphorylation of 1,6-anhydro-N-acetylmuramic acid (anhMurNAc) with the simultaneous cleavage of the 1,6-anhydro ring, generating MurNAc-6-P. Is required for the utilization of anhMurNAc either imported from the medium or derived from its own cell wall murein, and thus plays a role in cell wall recycling. This is Anhydro-N-acetylmuramic acid kinase from Rhodopseudomonas palustris (strain BisB18).